A 352-amino-acid polypeptide reads, in one-letter code: Holliday junction branch migration complex subunit RuvB (352 aa).

A large ATPase domain (RuvB-L) region spans residues 13-201; it reads IPRSRKELRL…FGLCHKIEFY (189 aa). ATP is bound by residues L37, R41, G82, K85, T86, T87, 148-150, R191, Y201, and R238; that span reads EDF. Residue T86 participates in Mg(2+) binding. Residues 202–273 are small ATPAse domain (RuvB-S); sequence SNDELKQIIF…IIEKALDSQK (72 aa). The tract at residues 276–352 is head domain (RuvB-H); sequence NRGLDNVDRK…KYISSNNEKY (77 aa). Residues R330 and R335 each contribute to the DNA site.

It belongs to the RuvB family. In terms of assembly, homohexamer. Forms an RuvA(8)-RuvB(12)-Holliday junction (HJ) complex. HJ DNA is sandwiched between 2 RuvA tetramers; dsDNA enters through RuvA and exits via RuvB. An RuvB hexamer assembles on each DNA strand where it exits the tetramer. Each RuvB hexamer is contacted by two RuvA subunits (via domain III) on 2 adjacent RuvB subunits; this complex drives branch migration. In the full resolvosome a probable DNA-RuvA(4)-RuvB(12)-RuvC(2) complex forms which resolves the HJ.

The protein resides in the cytoplasm. It catalyses the reaction ATP + H2O = ADP + phosphate + H(+). In terms of biological role, the RuvA-RuvB-RuvC complex processes Holliday junction (HJ) DNA during genetic recombination and DNA repair, while the RuvA-RuvB complex plays an important role in the rescue of blocked DNA replication forks via replication fork reversal (RFR). RuvA specifically binds to HJ cruciform DNA, conferring on it an open structure. The RuvB hexamer acts as an ATP-dependent pump, pulling dsDNA into and through the RuvAB complex. RuvB forms 2 homohexamers on either side of HJ DNA bound by 1 or 2 RuvA tetramers; 4 subunits per hexamer contact DNA at a time. Coordinated motions by a converter formed by DNA-disengaged RuvB subunits stimulates ATP hydrolysis and nucleotide exchange. Immobilization of the converter enables RuvB to convert the ATP-contained energy into a lever motion, pulling 2 nucleotides of DNA out of the RuvA tetramer per ATP hydrolyzed, thus driving DNA branch migration. The RuvB motors rotate together with the DNA substrate, which together with the progressing nucleotide cycle form the mechanistic basis for DNA recombination by continuous HJ branch migration. Branch migration allows RuvC to scan DNA until it finds its consensus sequence, where it cleaves and resolves cruciform DNA. The chain is Holliday junction branch migration complex subunit RuvB from Prochlorococcus marinus (strain MIT 9515).